Consider the following 510-residue polypeptide: MSHRERDRDRDRDSDRDRDRNRYSRSRSRGSRSRSRSRSRSRDRNRNRDYNKDRSSNRDSYYNDRDYKKDRSSNRDRDYYDRDRNRDYKNSSSGSSSGGGGGGSGENYTVKSSSYRESNSNNSKVEIQKQENISKDYFIDNKGVNNSIERKDNIKNENNNNNSFDNRKAEFNNNSYGEKKEFDNNNNRNYHGGNSRYVNNNNNNNNNNYNNNNNKSNYNGTDFFEYRKKLREEATCFSVYERSPSPPKKGELEEIDDQFLSNKKKSKKSRRKSSSNSDSSSSDSDSDSSRSREKRKKSKSRKDKKKRKEKKKHQRKSSKRSSKYSDSDSDSDSSFSDSDYSDSDRSDSEGRSRKKRSKKRSKKRHDHHKESVHDASMWEEKVEQQTQTLSNRDIGPKPISEVQVGSYGGAMMPGEAEAIAQFVKENKRIPRRGEVGLTSEQIASFEETGYVMSGSRHRRMNAVRIRKESQVYSAEEQKALAMLNREEKAKRENRLLADFRDLINTKLQAD.

A compositionally biased stretch (basic and acidic residues) spans 1-22; sequence MSHRERDRDRDRDSDRDRDRNR. Disordered stretches follow at residues 1–128, 149–220, and 239–401; these read MSHR…VEIQ, ERKD…NYNG, and VYER…PISE. Basic residues predominate over residues 23-39; it reads YSRSRSRGSRSRSRSRS. Over residues 40 to 89 the composition is skewed to basic and acidic residues; the sequence is RSRDRNRNRDYNKDRSSNRDSYYNDRDYKKDRSSNRDRDYYDRDRNRDYK. Residues 96–105 show a composition bias toward gly residues; that stretch reads SSGGGGGGSG. Low complexity-rich tracts occupy residues 112-123 and 184-219; these read SSSYRESNSNNS and NNNN…SNYN. Basic residues predominate over residues 262 to 273; sequence NKKKSKKSRRKS. Residues 274-283 are compositionally biased toward low complexity; the sequence is SSNSDSSSSD. The span at 292 to 322 shows a compositional bias: basic residues; it reads REKRKKSKSRKDKKKRKEKKKHQRKSSKRSS. The segment covering 342 to 351 has biased composition (basic and acidic residues); the sequence is DSDRSDSEGR. Basic residues predominate over residues 352-367; the sequence is SRKKRSKKRSKKRHDH. A compositionally biased stretch (basic and acidic residues) spans 368–383; the sequence is HKESVHDASMWEEKVE.

It belongs to the NKAP family.

The sequence is that of NKAP family protein from Dictyostelium discoideum (Social amoeba).